A 306-amino-acid chain; its full sequence is Putative S-adenosyl-L-methionine-dependent methyltransferase FRAAL5401 (306 aa).

S-adenosyl-L-methionine contacts are provided by residues Asp126 and 155–156; that span reads DL. The tract at residues 201-225 is disordered; it reads LSAPESRVATENRPNPKPGDEDRTK.

This sequence belongs to the UPF0677 family.

Its function is as follows. Exhibits S-adenosyl-L-methionine-dependent methyltransferase activity. This chain is Putative S-adenosyl-L-methionine-dependent methyltransferase FRAAL5401, found in Frankia alni (strain DSM 45986 / CECT 9034 / ACN14a).